The following is a 284-amino-acid chain: 2-dehydro-3-deoxyphosphooctonate aldolase (284 aa).

Belongs to the KdsA family.

It localises to the cytoplasm. The catalysed reaction is D-arabinose 5-phosphate + phosphoenolpyruvate + H2O = 3-deoxy-alpha-D-manno-2-octulosonate-8-phosphate + phosphate. It functions in the pathway carbohydrate biosynthesis; 3-deoxy-D-manno-octulosonate biosynthesis; 3-deoxy-D-manno-octulosonate from D-ribulose 5-phosphate: step 2/3. It participates in bacterial outer membrane biogenesis; lipopolysaccharide biosynthesis. The protein is 2-dehydro-3-deoxyphosphooctonate aldolase of Burkholderia cenocepacia (strain ATCC BAA-245 / DSM 16553 / LMG 16656 / NCTC 13227 / J2315 / CF5610) (Burkholderia cepacia (strain J2315)).